A 397-amino-acid chain; its full sequence is 1-deoxy-D-xylulose 5-phosphate reductoisomerase (397 aa).

The NADPH site is built by Thr17, Gly18, Ser19, Ile20, Asn47, and Asn130. Lys131 contributes to the 1-deoxy-D-xylulose 5-phosphate binding site. NADPH is bound at residue Glu132. Asp156 serves as a coordination point for Mn(2+). 1-deoxy-D-xylulose 5-phosphate is bound by residues Ser157, Glu158, Ser182, and His205. A Mn(2+)-binding site is contributed by Glu158. Gly211 contacts NADPH. 4 residues coordinate 1-deoxy-D-xylulose 5-phosphate: Ser218, Asn223, Lys224, and Glu227. Glu227 is a Mn(2+) binding site.

This sequence belongs to the DXR family. The cofactor is Mg(2+). It depends on Mn(2+) as a cofactor.

It carries out the reaction 2-C-methyl-D-erythritol 4-phosphate + NADP(+) = 1-deoxy-D-xylulose 5-phosphate + NADPH + H(+). It participates in isoprenoid biosynthesis; isopentenyl diphosphate biosynthesis via DXP pathway; isopentenyl diphosphate from 1-deoxy-D-xylulose 5-phosphate: step 1/6. In terms of biological role, catalyzes the NADPH-dependent rearrangement and reduction of 1-deoxy-D-xylulose-5-phosphate (DXP) to 2-C-methyl-D-erythritol 4-phosphate (MEP). This Allorhizobium ampelinum (strain ATCC BAA-846 / DSM 112012 / S4) (Agrobacterium vitis (strain S4)) protein is 1-deoxy-D-xylulose 5-phosphate reductoisomerase.